A 707-amino-acid polypeptide reads, in one-letter code: Vicilin-like seed storage protein At2g18540 (707 aa).

The signal sequence occupies residues 1-24 (MSRFRILPLSIFLCFVSLFFCTES). A Cupin type-1 1 domain is found at 42–185 (PLLVKKDQRT…AFAVPEDILR (144 aa)). N-linked (GlcNAc...) asparagine glycans are attached at residues Asn-60, Asn-203, Asn-285, Asn-356, Asn-396, and Asn-399. In terms of domain architecture, Cupin type-1 2 spans 247–403 (FNVFEEDPDF…SFNLSNETIK (157 aa)). Residues 439–696 (EEEEIERRRK…KKEEEEEKRR (258 aa)) are compositionally biased toward basic and acidic residues. The segment at 439–707 (EEEEIERRRK…PPQPKPPEEI (269 aa)) is disordered. The segment covering 698–707 (PPQPKPPEEI) has biased composition (pro residues).

This sequence belongs to the 7S seed storage protein family.

Seed storage protein. The sequence is that of Vicilin-like seed storage protein At2g18540 from Arabidopsis thaliana (Mouse-ear cress).